Consider the following 117-residue polypeptide: Large ribosomal subunit protein uL18 (117 aa).

This sequence belongs to the universal ribosomal protein uL18 family. As to quaternary structure, part of the 50S ribosomal subunit; part of the 5S rRNA/L5/L18/L25 subcomplex. Contacts the 5S and 23S rRNAs.

Its function is as follows. This is one of the proteins that bind and probably mediate the attachment of the 5S RNA into the large ribosomal subunit, where it forms part of the central protuberance. In Alkalilimnicola ehrlichii (strain ATCC BAA-1101 / DSM 17681 / MLHE-1), this protein is Large ribosomal subunit protein uL18.